A 91-amino-acid chain; its full sequence is MTGSSIVSLMSQSLVVFMIWILPPLIASVIVGLTIGIIQAATQIQDESLPLTVKLLVVVAVIGLFAPVLSAPLIELADQIFTEFPAMTLGY.

A run of 2 helical transmembrane segments spans residues 15–35 (VVFM…GLTI) and 55–75 (LLVV…PLIE).

Belongs to the FliQ/MopD/SpaQ family.

It localises to the cell membrane. Could be involved in the secretion of an unknown factor. The protein is Probable translocation protein y4yM of Sinorhizobium fredii (strain NBRC 101917 / NGR234).